The sequence spans 551 residues: Arginine--tRNA ligase (551 aa).

A 'HIGH' region motif is present at residues 123–133; sequence ANPTGPLTIGR.

Belongs to the class-I aminoacyl-tRNA synthetase family. In terms of assembly, monomer.

It is found in the cytoplasm. It catalyses the reaction tRNA(Arg) + L-arginine + ATP = L-arginyl-tRNA(Arg) + AMP + diphosphate. The sequence is that of Arginine--tRNA ligase from Chlorobaculum tepidum (strain ATCC 49652 / DSM 12025 / NBRC 103806 / TLS) (Chlorobium tepidum).